The chain runs to 128 residues: Large ribosomal subunit protein uL22 (128 aa).

It belongs to the universal ribosomal protein uL22 family. In terms of assembly, part of the 50S ribosomal subunit.

This protein binds specifically to 23S rRNA; its binding is stimulated by other ribosomal proteins, e.g. L4, L17, and L20. It is important during the early stages of 50S assembly. It makes multiple contacts with different domains of the 23S rRNA in the assembled 50S subunit and ribosome. In terms of biological role, the globular domain of the protein is located near the polypeptide exit tunnel on the outside of the subunit, while an extended beta-hairpin is found that lines the wall of the exit tunnel in the center of the 70S ribosome. This chain is Large ribosomal subunit protein uL22, found in Prochlorococcus marinus (strain MIT 9515).